Consider the following 198-residue polypeptide: Large ribosomal subunit protein bL25 (198 aa).

Belongs to the bacterial ribosomal protein bL25 family. CTC subfamily. As to quaternary structure, part of the 50S ribosomal subunit; part of the 5S rRNA/L5/L18/L25 subcomplex. Contacts the 5S rRNA. Binds to the 5S rRNA independently of L5 and L18.

Its function is as follows. This is one of the proteins that binds to the 5S RNA in the ribosome where it forms part of the central protuberance. The sequence is that of Large ribosomal subunit protein bL25 from Azotobacter vinelandii (strain DJ / ATCC BAA-1303).